The chain runs to 446 residues: AP-2 complex subunit mu (446 aa).

A phosphoserine mark is found at Ser145, Ser151, and Ser152. Residue Thr157 is modified to Phosphothreonine. Residues 177–445 (KNSIYIDIVE…STRAGTCEIR (269 aa)) form the MHD domain.

Belongs to the adaptor complexes medium subunit family. In terms of assembly, adaptor protein complex 2 (AP-2) is a heterotetramer composed of two large adaptins (alpha-type subunit apl3 and beta-type subunit apl1), a medium chain (mu-type subunit apm4) and a small adaptin (sigma-type subunit aps2).

The protein localises to the cell membrane. It is found in the membrane. The protein resides in the coated pit. In terms of biological role, component of the adaptor complexes which link clathrin to receptors in coated vesicles. Clathrin-associated protein complexes are believed to interact with the cytoplasmic tails of membrane proteins, leading to their selection and concentration. AP50 is a subunit of the plasma membrane adaptor (Potential). The chain is AP-2 complex subunit mu (apm4) from Schizosaccharomyces pombe (strain 972 / ATCC 24843) (Fission yeast).